Reading from the N-terminus, the 241-residue chain is Small ribosomal subunit protein uS2 (241 aa).

The protein belongs to the universal ribosomal protein uS2 family.

The chain is Small ribosomal subunit protein uS2 from Sodalis glossinidius (strain morsitans).